Here is a 456-residue protein sequence, read N- to C-terminus: Gamma-aminobutyric acid receptor subunit alpha-1 (456 aa).

The first 27 residues, 1-27 (MRKSPGLSDCLWAWILLLSTLTGRSYG), serve as a signal peptide directing secretion. The Extracellular segment spans residues 28–253 (QPSLQDELKD…FHLKRKIGYF (226 aa)). Asn-38 carries an N-linked (GlcNAc...) asparagine glycan. Arg-94 is a binding site for 4-aminobutanoate. An N-linked (GlcNAc...) asparagine glycan is attached at Asn-138. Thr-157 contacts 4-aminobutanoate. Cys-166 and Cys-180 are joined by a disulfide. Residues 254–274 (VIQTYLPCIMTVILSQVSFWL) form a helical membrane-spanning segment. Residue Trp-273 participates in 3alpha-hydroxy-5alpha-pregnan-11,20-dione binding. Residues 275-279 (NRESV) lie on the Cytoplasmic side of the membrane. A helical membrane pass occupies residues 280–301 (PARTVFGVTTVLTMTTLSISAR). Over 302 to 311 (NSLPKVAYAT) the chain is Extracellular. Residues 312–333 (AMDWFIAVCYAFVFSALIEFAT) traverse the membrane as a helical segment. At 334–421 (VNYFTKRGYA…TFNSVSKIDR (88 aa)) the chain is on the cytoplasmic side. The chain crosses the membrane as a helical span at residues 422 to 441 (LSRIAFPLLFGIFNLVYWAT). Residues 442–456 (YLNREPQLKAPTPHQ) are Extracellular-facing.

This sequence belongs to the ligand-gated ion channel (TC 1.A.9) family. Gamma-aminobutyric acid receptor (TC 1.A.9.5) subfamily. GABRA1 sub-subfamily. Heteropentamer, formed by a combination of alpha (GABRA1-6), beta (GABRB1-3), gamma (GABRG1-3), delta (GABRD), epsilon (GABRE), rho (GABRR1-3), pi (GABRP) and theta (GABRQ) subunits, each subunit exhibiting distinct physiological and pharmacological properties. Interacts with UBQLN1. Interacts with TRAK1. Interacts with KIF21B. Identified in a complex of 720 kDa composed of LHFPL4, NLGN2, GABRA1, GABRB2, GABRG2 and GABRB3. Interacts with LHFPL4. Interacts with NLGN2. Interacts with SHISA7; interaction leads regulation of GABAAR trafficking, channel deactivation kinetics and pharmacology.

The protein resides in the postsynaptic cell membrane. Its subcellular location is the cell membrane. It is found in the cytoplasmic vesicle membrane. The enzyme catalyses chloride(in) = chloride(out). Allosterically activated by benzodiazepines and the anesthetic alphaxalone. Allosterically activated by pentobarbital. Inhibited by the antagonist bicuculline. Potentiated by histamine. Alpha subunit of the heteropentameric ligand-gated chloride channel gated by Gamma-aminobutyric acid (GABA), a major inhibitory neurotransmitter in the brain. GABA-gated chloride channels, also named GABA(A) receptors (GABAAR), consist of five subunits arranged around a central pore and contain GABA active binding site(s) located at the alpha and beta subunit interface(s). When activated by GABA, GABAARs selectively allow the flow of chloride anions across the cell membrane down their electrochemical gradient. Alpha-1/GABRA1-containing GABAARs are largely synaptic. Chloride influx into the postsynaptic neuron following GABAAR opening decreases the neuron ability to generate a new action potential, thereby reducing nerve transmission. GABAARs containing alpha-1 and beta-2 or -3 subunits exhibit synaptogenic activity; the gamma-2 subunit being necessary but not sufficient to induce rapid synaptic contacts formation. GABAARs function also as histamine receptor where histamine binds at the interface of two neighboring beta subunits and potentiates GABA response. GABAARs containing alpha, beta and epsilon subunits also permit spontaneous chloride channel activity while preserving the structural information required for GABA-gated openings. Alpha-1-mediated plasticity in the orbitofrontal cortex regulates context-dependent action selection. Together with rho subunits, may also control neuronal and glial GABAergic transmission in the cerebellum. The protein is Gamma-aminobutyric acid receptor subunit alpha-1 of Homo sapiens (Human).